We begin with the raw amino-acid sequence, 245 residues long: 1-(5-phosphoribosyl)-5-[(5-phosphoribosylamino)methylideneamino] imidazole-4-carboxamide isomerase (245 aa).

Residue aspartate 8 is the Proton acceptor of the active site. Catalysis depends on aspartate 130, which acts as the Proton donor.

This sequence belongs to the HisA/HisF family.

The protein localises to the cytoplasm. The catalysed reaction is 1-(5-phospho-beta-D-ribosyl)-5-[(5-phospho-beta-D-ribosylamino)methylideneamino]imidazole-4-carboxamide = 5-[(5-phospho-1-deoxy-D-ribulos-1-ylimino)methylamino]-1-(5-phospho-beta-D-ribosyl)imidazole-4-carboxamide. It functions in the pathway amino-acid biosynthesis; L-histidine biosynthesis; L-histidine from 5-phospho-alpha-D-ribose 1-diphosphate: step 4/9. This is 1-(5-phosphoribosyl)-5-[(5-phosphoribosylamino)methylideneamino] imidazole-4-carboxamide isomerase from Azotobacter vinelandii (strain DJ / ATCC BAA-1303).